Consider the following 393-residue polypeptide: MDVNNLKQILEETSALSDHKTKTEKYKSILQQLVESKQVAPLKVFITHLTDESTPLVISRTILLSFTSSHKTLPEDIQMELGIFVLDRIQNRVVAFEEQVSEIRYNLAKLYERQENWRESARCLIAIPLDSSQRVISPEYKVKIYVKIARLFLEEEESGQAETYINRASDSLHLVKNQKLILAHKTCFARIMDYKRMFLKASLRYYDLSQCLPKDTERMHALSCAIVCAILDKAGPQRSRTLATLYKDERSQQLGVYTFLEKMFLERILKKTEVKKFAEQLKPHQMALLSDGNTVLDRAVIEHNLLSASKLYNNITFDELGSLLEIQAEKAEKVASKMVCEERLIGSIDQIERLIQFENVGDSLTQWDKKIEGLCIHMNNIIESISKYPEFIV.

A PCI domain is found at 197-362; the sequence is MFLKASLRYY…RLIQFENVGD (166 aa).

The protein belongs to the CSN4 family. In terms of assembly, component of the CSN complex. The holocomplex is comprised of 8 subunits csn1-8. In the complex, it probably interacts directly with csn1, csn2, csn3, csn4, csn6 and csn8.

The protein resides in the cytoplasm. It localises to the nucleus. Functionally, component of the COP9 signalosome complex (CSN), a complex involved in various cellular and developmental processes. The CSN complex is an essential regulator of the ubiquitin (Ubl) conjugation pathway by mediating the deneddylation of the cullin subunits of E3 ligase complexes, leading to modify the Ubl ligase activity. This Dictyostelium discoideum (Social amoeba) protein is COP9 signalosome complex subunit 4 (csn4).